Here is a 445-residue protein sequence, read N- to C-terminus: Tubulin beta chain (445 aa).

Positions 11, 69, 138, 142, 143, 144, 204, and 226 each coordinate GTP. E69 serves as a coordination point for Mg(2+).

Belongs to the tubulin family. In terms of assembly, dimer of alpha and beta chains. A typical microtubule is a hollow water-filled tube with an outer diameter of 25 nm and an inner diameter of 15 nM. Alpha-beta heterodimers associate head-to-tail to form protofilaments running lengthwise along the microtubule wall with the beta-tubulin subunit facing the microtubule plus end conferring a structural polarity. Microtubules usually have 13 protofilaments but different protofilament numbers can be found in some organisms and specialized cells. It depends on Mg(2+) as a cofactor.

It localises to the cytoplasm. It is found in the cytoskeleton. In terms of biological role, tubulin is the major constituent of microtubules, a cylinder consisting of laterally associated linear protofilaments composed of alpha- and beta-tubulin heterodimers. Microtubules grow by the addition of GTP-tubulin dimers to the microtubule end, where a stabilizing cap forms. Below the cap, tubulin dimers are in GDP-bound state, owing to GTPase activity of alpha-tubulin. In Leishmania mexicana, this protein is Tubulin beta chain.